The primary structure comprises 114 residues: UPF0145 protein Acry_1752 (114 aa).

Belongs to the UPF0145 family.

The chain is UPF0145 protein Acry_1752 from Acidiphilium cryptum (strain JF-5).